The primary structure comprises 79 residues: MPRPRKADRTPARQRPNPLDRDGVTYVDYKDTELLRKFVSDRGKIRSRRVTRVTSQQQRQLARAIKNAREMALLPYGTR.

The segment covering 1–11 (MPRPRKADRTP) has biased composition (basic and acidic residues). Positions 1 to 24 (MPRPRKADRTPARQRPNPLDRDGV) are disordered.

Belongs to the bacterial ribosomal protein bS18 family. Part of the 30S ribosomal subunit. Forms a tight heterodimer with protein bS6.

In terms of biological role, binds as a heterodimer with protein bS6 to the central domain of the 16S rRNA, where it helps stabilize the platform of the 30S subunit. The sequence is that of Small ribosomal subunit protein bS18B from Streptomyces coelicolor (strain ATCC BAA-471 / A3(2) / M145).